Here is a 567-residue protein sequence, read N- to C-terminus: Probable E3 ubiquitin-protein ligase ARI8 (567 aa).

A disordered region spans residues 1-27 (MEADDDFYSGTENYSDYADSDEDDADG). The span at 18 to 27 (ADSDEDDADG) shows a compositional bias: acidic residues. The segment at 124-337 (GELDCGICFE…GGFYACNRYE (214 aa)) is TRIAD supradomain. Residues C128, C131, C145, H147, C150, C153, C173, C178, C217, C222, C239, C241, C246, C249, H254, C259, C286, and C289 each coordinate Zn(2+). The segment at 128–178 (CGICFETFLSDKLHAAACGHPFCDSCWEGYITTAINDGPGCLTLRCPDPSC) adopts an RING-type 1 zinc-finger fold. An IBR-type zinc finger spans residues 197 to 259 (QKYTSYFVRS…AEEAHRPVDC (63 aa)). The RING-type 2; atypical zinc finger occupies 286–316 (CPKCKRPIEKNQGCMHITCTPPCKFEFCWLC). C299 is an active-site residue. Zn(2+)-binding residues include C304, C308, C313, C316, H323, and C333. The disordered stretch occupies residues 514–543 (DAYDRTSSSKSLGGKTKGSSSKASSSDSSH). Residues 521–542 (SSKSLGGKTKGSSSKASSSDSS) are compositionally biased toward low complexity. The RanBP2-type zinc-finger motif lies at 540-567 (DSSHWPCEYCTYVNPRSTTICQMCEHGR).

It belongs to the RBR family. Ariadne subfamily. It depends on Zn(2+) as a cofactor. Ubiquitous.

The catalysed reaction is [E2 ubiquitin-conjugating enzyme]-S-ubiquitinyl-L-cysteine + [acceptor protein]-L-lysine = [E2 ubiquitin-conjugating enzyme]-L-cysteine + [acceptor protein]-N(6)-ubiquitinyl-L-lysine.. It participates in protein modification; protein ubiquitination. Its function is as follows. Might act as an E3 ubiquitin-protein ligase, or as part of E3 complex, which accepts ubiquitin from specific E2 ubiquitin-conjugating enzymes and then transfers it to substrates. The protein is Probable E3 ubiquitin-protein ligase ARI8 (ARI8) of Arabidopsis thaliana (Mouse-ear cress).